A 240-amino-acid chain; its full sequence is Small ribosomal subunit protein uS3m (240 aa).

It belongs to the universal ribosomal protein uS3 family.

It is found in the mitochondrion. The protein is Small ribosomal subunit protein uS3m (RPS3) of Chondrus crispus (Carrageen Irish moss).